The chain runs to 896 residues: MTIDKTFDPAAIEARWYAHWEDNGLFRPERPEAEPYTIVIPPPNVTGSLHIGHALDDTLQDVLIRHARLKGKDALWVVGTDHAGIATQMVVERQLDAKGQKRTDFTREQFIAKVWEWKEESGGTITRQLRRLGASCDWANERFTMDEGFSKAVLKVFVDLYNQGLLYRDKRLVNWDPGLKTAISDLEVETKEVQGSFWHFSYPLADGSGAISVATTRPETMLADMAVAVNPEDGRYRALIGKSVKLPITGRLIPIVADEHADPELGSGAVKITPGHDFNDFEVGKRAGFKPADMLNMLDAEAKVVQTADGLIPADYLGLDRFEARRKVVAAIEAEGRLEKVEDRVIQTPYGDRSNAVIEPWLTDQWYVDAETLAKPAIEAVRSGAIRVVPESWTKTYYNWLDNIQPWCVSRQLWWGHQIPAWYDADGQVYVAEDEAAASALAGGKALTRDSDVLDTWFSSALWPFGTIGWPDQAGQQPPEAYQAGAAGKASKLQRHYPNDVLISGFDILFFWDARMIMQGLHFMGEVPFRTLYLHGLVRAADGSKMSKSKGNTVDPLGLIDKYGADALRFTLTAMESQGRDIKLDEKRVEGYRNFATKLWNAARFAQGNGIGASTTIEPPAAELAVNRWIIAETVRTVQALDLAIADLRYDESANTIYQFVWASFCDWYLELIKPVLAEGADQGQAAETRAVAGWVLDQILVMLHPFMPFITEELWHALGRRDYDIIVAKWPMADARAIDPAAQQEIDWLIRMVGEVRAARTGLNVPPGARLPAYARGASEETRRRLAANAVAIARMARIDLAEGEAPAGGAAQVVVDEATYVLPLEGVIDLDAERARLAKGIAAAEKERDGLAARLGNPAFVEKAKPEAVEKARADHAEKSLEAEQLGAALARLG.

Positions 43–53 (PNVTGSLHIGH) match the 'HIGH' region motif. Positions 545–549 (KMSKS) match the 'KMSKS' region motif. Lys548 contacts ATP. Residues 831-857 (DLDAERARLAKGIAAAEKERDGLAARL) adopt a coiled-coil conformation.

This sequence belongs to the class-I aminoacyl-tRNA synthetase family. ValS type 1 subfamily. Monomer.

It localises to the cytoplasm. It carries out the reaction tRNA(Val) + L-valine + ATP = L-valyl-tRNA(Val) + AMP + diphosphate. Functionally, catalyzes the attachment of valine to tRNA(Val). As ValRS can inadvertently accommodate and process structurally similar amino acids such as threonine, to avoid such errors, it has a 'posttransfer' editing activity that hydrolyzes mischarged Thr-tRNA(Val) in a tRNA-dependent manner. The protein is Valine--tRNA ligase of Rhizorhabdus wittichii (strain DSM 6014 / CCUG 31198 / JCM 15750 / NBRC 105917 / EY 4224 / RW1) (Sphingomonas wittichii).